Consider the following 358-residue polypeptide: Gibberellin 2-beta-dioxygenase 6 (358 aa).

Residues Asp207 to Pro308 enclose the Fe2OG dioxygenase domain. Tyr218 is a 2-oxoglutarate binding site. The Fe cation site is built by His233, Asp235, and His289. 2-oxoglutarate-binding residues include Arg299 and Ser301.

The protein belongs to the iron/ascorbate-dependent oxidoreductase family. GA2OX subfamily. It depends on L-ascorbate as a cofactor. Fe(2+) serves as cofactor. Expressed in panicles. Expressed at low levels in young shoots, leaf blades and elongating internodes.

The protein localises to the cytoplasm. Its subcellular location is the nucleus. It catalyses the reaction gibberellin A1 + 2-oxoglutarate + O2 = gibberellin A8 + succinate + CO2. Functionally, catalyzes the 2-beta-hydroxylation of several biologically active gibberellins, leading to the homeostatic regulation of their endogenous level. Catabolism of gibberellins (GAs) plays a central role in plant development. In vitro, converts GA12 and GA53 to the corresponding 2-beta-hydroxylated products GA110 and GA97, respectively. The sequence is that of Gibberellin 2-beta-dioxygenase 6 from Oryza sativa subsp. japonica (Rice).